The chain runs to 751 residues: WD repeat-containing protein 91 (751 aa).

The stretch at 188-212 (IQEENESLRHKLFALQAESSRMKKE) forms a coiled coil. The interval 264–395 (LSQSKKGPAR…ASSTESVGVR (132 aa)) is disordered. Over residues 278–287 (SGASPTQTGS) the composition is skewed to polar residues. Residues 334–346 (RLQEHGKERRELL) show a composition bias toward basic and acidic residues. A compositionally biased stretch (polar residues) spans 377 to 391 (QAETSTKMPASSTES). WD repeat units lie at residues 410 to 449 (EHHS…QTKA), 452 to 492 (ISKS…NLCE), 497 to 559 (EDMP…QQLQ), 564 to 603 (PEPI…CAMS), 606 to 645 (AHDG…LKIS), 668 to 706 (VQFP…KVLE), and 713 to 751 (GHRA…AQKS).

Belongs to the WD repeat WDR91 family.

It localises to the early endosome membrane. The protein localises to the late endosome membrane. Functions as a negative regulator of the PI3 kinase/PI3K activity associated with endosomal membranes. By modifying the phosphatidylinositol 3-phosphate/PtdInsP3 content of endosomal membranes may regulate endosome fusion, recycling, sorting and early to late endosome transport. This Gallus gallus (Chicken) protein is WD repeat-containing protein 91.